A 466-amino-acid polypeptide reads, in one-letter code: Soluble pyridine nucleotide transhydrogenase (466 aa).

Residue 36–45 (EKESSVGGGC) coordinates FAD.

It belongs to the class-I pyridine nucleotide-disulfide oxidoreductase family. It depends on FAD as a cofactor.

The protein localises to the cytoplasm. The enzyme catalyses NAD(+) + NADPH = NADH + NADP(+). Conversion of NADPH, generated by peripheral catabolic pathways, to NADH, which can enter the respiratory chain for energy generation. In Vibrio vulnificus (strain CMCP6), this protein is Soluble pyridine nucleotide transhydrogenase.